The following is a 338-amino-acid chain: Lipoate-protein ligase A (338 aa).

In terms of domain architecture, BPL/LPL catalytic spans 29-216; the sequence is DPNQRVLFLW…AFFAHYGARV (188 aa). Residues Arg71, 76 to 79, and Lys134 each bind ATP; that span reads GAVF. Lys134 lines the (R)-lipoate pocket.

This sequence belongs to the LplA family. In terms of assembly, monomer.

It localises to the cytoplasm. The catalysed reaction is L-lysyl-[lipoyl-carrier protein] + (R)-lipoate + ATP = N(6)-[(R)-lipoyl]-L-lysyl-[lipoyl-carrier protein] + AMP + diphosphate + H(+). Its pathway is protein modification; protein lipoylation via exogenous pathway; protein N(6)-(lipoyl)lysine from lipoate: step 1/2. The protein operates within protein modification; protein lipoylation via exogenous pathway; protein N(6)-(lipoyl)lysine from lipoate: step 2/2. In terms of biological role, catalyzes both the ATP-dependent activation of exogenously supplied lipoate to lipoyl-AMP and the transfer of the activated lipoyl onto the lipoyl domains of lipoate-dependent enzymes. The sequence is that of Lipoate-protein ligase A from Aeromonas salmonicida (strain A449).